Here is a 552-residue protein sequence, read N- to C-terminus: Elongator complex protein 3 (552 aa).

The region spanning 84 to 374 (RTASGIAVVA…YRVQRDIPMP (291 aa)) is the Radical SAM core domain. Positions 101, 111, and 114 each coordinate [4Fe-4S] cluster. Acetyl-CoA is bound by residues lysine 166, 476-479 (ELHV), 499-501 (FGM), and tyrosine 532. The region spanning 398 to 552 (TTCRDVRTRE…YMSKSIEENN (155 aa)) is the N-acetyltransferase domain.

This sequence belongs to the ELP3 family. In terms of assembly, component of the elongator complex composed of Elp1, Elp2, Elp3, Elp4, Elp5 and Elp6. The elongator complex associates with and stabilizes microtubules; efficient interaction requires the full complex. The cofactor is [4Fe-4S] cluster.

It is found in the cytoplasm. The protein localises to the nucleus. Its subcellular location is the cytoskeleton. The protein resides in the spindle. The enzyme catalyses uridine(34) in tRNA + acetyl-CoA + S-adenosyl-L-methionine + H2O = 5-(carboxymethyl)uridine(34) in tRNA + 5'-deoxyadenosine + L-methionine + CoA + 2 H(+). Its pathway is tRNA modification; 5-methoxycarbonylmethyl-2-thiouridine-tRNA biosynthesis. Its function is as follows. Catalytic tRNA acetyltransferase subunit of the elongator complex, which is required for multiple tRNA modifications, including mcm5U (5-methoxycarbonylmethyl uridine), mcm5s2U (5-methoxycarbonylmethyl-2-thiouridine), and ncm5U (5-carbamoylmethyl uridine). In the elongator complex, acts as a tRNA uridine(34) acetyltransferase by mediating formation of carboxymethyluridine in the wobble base at position 34 in tRNAs. Binding by the elongator complex stabilizes microtubules and promotes their growth. This induces central spindle asymmetry, promoting polarized signaling endosome trafficking during asymmetric cell division and cell fate assignation of sensory organ precursor cells. Plays a role in the control of synaptic bouton expansion. Required for larval development. Involved in protein synthesis-dependent long-term memory formation, probably as part of the elongator complex. The protein is Elongator complex protein 3 of Drosophila melanogaster (Fruit fly).